Here is a 409-residue protein sequence, read N- to C-terminus: Na(+)-translocating NADH-quinone reductase subunit F (409 aa).

A helical transmembrane segment spans residues 5 to 25 (FIFGIGAFTAIVLVLAVVILI). The 95-residue stretch at 34 to 128 (GDITISINND…SMDVELPEEV (95 aa)) folds into the 2Fe-2S ferredoxin-type domain. [2Fe-2S] cluster contacts are provided by Cys-71, Cys-77, Cys-80, and Cys-112. The FAD-binding FR-type domain maps to 131–271 (VKKWECTVIS…SGPFGEFFAK (141 aa)).

The protein belongs to the NqrF family. As to quaternary structure, composed of six subunits; NqrA, NqrB, NqrC, NqrD, NqrE and NqrF. It depends on [2Fe-2S] cluster as a cofactor. FAD serves as cofactor.

The protein resides in the cell inner membrane. The enzyme catalyses a ubiquinone + n Na(+)(in) + NADH + H(+) = a ubiquinol + n Na(+)(out) + NAD(+). NQR complex catalyzes the reduction of ubiquinone-1 to ubiquinol by two successive reactions, coupled with the transport of Na(+) ions from the cytoplasm to the periplasm. The first step is catalyzed by NqrF, which accepts electrons from NADH and reduces ubiquinone-1 to ubisemiquinone by a one-electron transfer pathway. This chain is Na(+)-translocating NADH-quinone reductase subunit F, found in Mannheimia succiniciproducens (strain KCTC 0769BP / MBEL55E).